Consider the following 245-residue polypeptide: Carbohydrate deacetylase (245 aa).

H59 and H125 together coordinate Mg(2+).

Belongs to the YdjC deacetylase family. In terms of assembly, homodimer. Mg(2+) serves as cofactor.

Functionally, probably catalyzes the deacetylation of acetylated carbohydrates an important step in the degradation of oligosaccharides. This chain is Carbohydrate deacetylase, found in Listeria welshimeri serovar 6b (strain ATCC 35897 / DSM 20650 / CCUG 15529 / CIP 8149 / NCTC 11857 / SLCC 5334 / V8).